The primary structure comprises 312 residues: Olfactory receptor 5P4 (312 aa).

The Extracellular portion of the chain corresponds to 1–25; that stretch reads METENDTMVTEFIILGLTDSATLRA. Asparagine 5 is a glycosylation site (N-linked (GlcNAc...) asparagine). A helical transmembrane segment spans residues 26-46; it reads ILFVFFLPVYIVTVVGNISII. Residues 47 to 54 lie on the Cytoplasmic side of the membrane; that stretch reads LLIRSSPQ. Residues 55 to 75 traverse the membrane as a helical segment; that stretch reads LHTPMYLFLSHLAFVDIGYST. Over 76–99 the chain is Extracellular; it reads SVTPIMLISFLREETTIPLAGCAA. The cysteines at positions 97 and 189 are disulfide-linked. Residues 100–120 form a helical membrane-spanning segment; sequence QLGSDVAFGTTECFLLATMAY. At 121 to 133 the chain is on the cytoplasmic side; the sequence is DRYVAICSPLLYS. A helical membrane pass occupies residues 134-154; the sequence is TQMSPAICCFLLGASYLGGCM. Over 155 to 196 the chain is Extracellular; the sequence is NASSFTGCFVNLNFCGPNKVNHFFCDLFPLVKLSCGHAYIAE. The helical transmembrane segment at 197-217 threads the bilayer; that stretch reads ISPSISSASVLVSTLSTIIVS. The Cytoplasmic segment spans residues 218–237; it reads YIYILHSILRMRSAEGRNKA. Residues 238 to 258 traverse the membrane as a helical segment; the sequence is FSTCTSHLTAVTLFYGTVLFV. Residues 259 to 271 lie on the Extracellular side of the membrane; that stretch reads YVMPKSSYSADQV. A helical transmembrane segment spans residues 272 to 292; it reads KVASVVYTVVIPMLNPLIYSL. The Cytoplasmic segment spans residues 293-312; the sequence is RNKEVKEAMKKLMARTHWFP.

This sequence belongs to the G-protein coupled receptor 1 family.

The protein resides in the cell membrane. Its function is as follows. Potential odorant receptor. This is Olfactory receptor 5P4 from Mus musculus (Mouse).